The primary structure comprises 216 residues: Splicing factor U2AF 23 kDa subunit (216 aa).

The C3H1-type 1 zinc-finger motif lies at 12–40 (EQDKVNCSFYYKIGACRHGERCSRKHVKP). Residues 44-141 (QTILCPNMYK…RPVYAELSPV (98 aa)) form the RRM domain. A C3H1-type 2 zinc finger spans residues 143-170 (DFREACCRQHETSECQRGGLCNFMHAKK). The disordered stretch occupies residues 194 to 216 (EMKKEPNSDSTNRWVSVTAERKN).

As to quaternary structure, forms a heterodimer with the U2AF large subunit. Can also form a homodimer. U2AF large subunit (U2AF59), U2AF small subunit (U2AF23) and SF1 (bpb1) interact to form a complex required for complex A formation. Interacts with cwf13.

The protein localises to the nucleus. Necessary for the splicing of pre-mRNA. The SF1-U2AF59-U2AF23 complex has a role in the recognition of the branch site (5'-UACUAAC-3'), the pyrimidine tract and the 3'-splice site at the 3'-end of introns. In Schizosaccharomyces pombe (strain 972 / ATCC 24843) (Fission yeast), this protein is Splicing factor U2AF 23 kDa subunit.